The sequence spans 283 residues: ATP phosphoribosyltransferase (283 aa).

The protein belongs to the ATP phosphoribosyltransferase family. Long subfamily. It depends on Mg(2+) as a cofactor.

The protein resides in the cytoplasm. It catalyses the reaction 1-(5-phospho-beta-D-ribosyl)-ATP + diphosphate = 5-phospho-alpha-D-ribose 1-diphosphate + ATP. Its pathway is amino-acid biosynthesis; L-histidine biosynthesis; L-histidine from 5-phospho-alpha-D-ribose 1-diphosphate: step 1/9. Its activity is regulated as follows. Feedback inhibited by histidine. Functionally, catalyzes the condensation of ATP and 5-phosphoribose 1-diphosphate to form N'-(5'-phosphoribosyl)-ATP (PR-ATP). Has a crucial role in the pathway because the rate of histidine biosynthesis seems to be controlled primarily by regulation of HisG enzymatic activity. The chain is ATP phosphoribosyltransferase from Bifidobacterium longum (strain DJO10A).